A 1366-amino-acid chain; its full sequence is DNA-directed RNA polymerase subunit beta' (1366 aa).

Residues 1-23 (MTSSKPKKSSRVRKTSKNSKKNN) show a composition bias toward basic residues. The interval 1–25 (MTSSKPKKSSRVRKTSKNSKKNNKI) is disordered. Cys-248, Cys-315, Cys-322, and Cys-325 together coordinate Zn(2+). The interval 1290–1366 (DYTVDMPQSP…LQEEGLLSDE (77 aa)) is disordered. Positions 1295 to 1305 (MPQSPTVSSTA) are enriched in polar residues. The segment covering 1354-1366 (LEGLQEEGLLSDE) has biased composition (low complexity).

The protein belongs to the RNA polymerase beta' chain family. RpoC2 subfamily. As to quaternary structure, in cyanobacteria the RNAP catalytic core is composed of 2 alpha, 1 beta, 1 beta', 1 gamma and 1 omega subunit. When a sigma factor is associated with the core the holoenzyme is formed, which can initiate transcription. Zn(2+) is required as a cofactor.

The enzyme catalyses RNA(n) + a ribonucleoside 5'-triphosphate = RNA(n+1) + diphosphate. Its function is as follows. DNA-dependent RNA polymerase catalyzes the transcription of DNA into RNA using the four ribonucleoside triphosphates as substrates. The polypeptide is DNA-directed RNA polymerase subunit beta' (Prochlorococcus marinus (strain MIT 9515)).